A 211-amino-acid chain; its full sequence is Pyridoxine/pyridoxamine 5'-phosphate oxidase (211 aa).

Substrate-binding positions include arginine 7–tyrosine 10 and lysine 65. FMN contacts are provided by residues arginine 60–lysine 65, tyrosine 75–threonine 76, arginine 81, lysine 82, and glutamine 104. The substrate site is built by tyrosine 122, arginine 126, and serine 130. Residues glutamine 139–serine 140 and tryptophan 184 each bind FMN. Arginine 190–histidine 192 is a substrate binding site. FMN is bound at residue arginine 194.

The protein belongs to the pyridoxamine 5'-phosphate oxidase family. Homodimer. The cofactor is FMN.

It catalyses the reaction pyridoxamine 5'-phosphate + O2 + H2O = pyridoxal 5'-phosphate + H2O2 + NH4(+). The catalysed reaction is pyridoxine 5'-phosphate + O2 = pyridoxal 5'-phosphate + H2O2. It functions in the pathway cofactor metabolism; pyridoxal 5'-phosphate salvage; pyridoxal 5'-phosphate from pyridoxamine 5'-phosphate: step 1/1. It participates in cofactor metabolism; pyridoxal 5'-phosphate salvage; pyridoxal 5'-phosphate from pyridoxine 5'-phosphate: step 1/1. In terms of biological role, catalyzes the oxidation of either pyridoxine 5'-phosphate (PNP) or pyridoxamine 5'-phosphate (PMP) into pyridoxal 5'-phosphate (PLP). The chain is Pyridoxine/pyridoxamine 5'-phosphate oxidase from Vibrio parahaemolyticus serotype O3:K6 (strain RIMD 2210633).